Here is a 439-residue protein sequence, read N- to C-terminus: MRLSRYFLPILRENPKEAEIVSHRLMLRAGMIRQEAAGIYAWLPLGFRVLQKVEQIVREEMDRAGAIELLMPTLQLADLWRETGRYDAYGPEMLRIKDRHERELLYGPTNEDMITEIFRAYVRSYRDLPKILYHIQWKFRDEQRPRFGVMRGREFLMKDAYSFDLDEEGARLSYNKMFVAYLRIYKRMGLTAIPMRAETGPIGGDLSHEFIILADTGESAVFCNKDVLDLPIPDEHTDYDGDLSPIIKQWTSLYAATEDVHDAARFESETPPEKRIERRGIEVGQVFYFGEKYSKPMRSLITGPDGSEKPFQGGSYGVGVSRLVGAIIEASHDEAGIIWPEAVAPFTVGLANLKVGDAATDAACAEIYERLEALGVDVLYDDTDDRPGGKFAKLDLIGLPYQIIVGPKGLAEGKIEMKTRATGARENLSIAAVIERFTT.

Belongs to the class-II aminoacyl-tRNA synthetase family. ProS type 2 subfamily. As to quaternary structure, homodimer.

It localises to the cytoplasm. It catalyses the reaction tRNA(Pro) + L-proline + ATP = L-prolyl-tRNA(Pro) + AMP + diphosphate. Catalyzes the attachment of proline to tRNA(Pro) in a two-step reaction: proline is first activated by ATP to form Pro-AMP and then transferred to the acceptor end of tRNA(Pro). This is Proline--tRNA ligase from Beijerinckia indica subsp. indica (strain ATCC 9039 / DSM 1715 / NCIMB 8712).